A 45-amino-acid polypeptide reads, in one-letter code: Pyruvate dehydrogenase E1 component (45 aa).

Homodimer. The cofactor is thiamine diphosphate.

It carries out the reaction N(6)-[(R)-lipoyl]-L-lysyl-[protein] + pyruvate + H(+) = N(6)-[(R)-S(8)-acetyldihydrolipoyl]-L-lysyl-[protein] + CO2. The pyruvate dehydrogenase complex catalyzes the overall conversion of pyruvate to acetyl-CoA and CO(2). It contains multiple copies of three enzymatic components: pyruvate dehydrogenase (E1), dihydrolipoamide acetyltransferase (E2) and lipoamide dehydrogenase (E3). In Azotobacter vinelandii, this protein is Pyruvate dehydrogenase E1 component.